The primary structure comprises 301 residues: Nitric oxide synthase-interacting protein (301 aa).

Ser-36 is subject to Phosphoserine. The interval 55-75 (DPVVTPDGYLYEREAILEYIL) is U-box-like. Residues 78 to 101 (KREIARQVKAYEKQRGARREEQKE) carry the Nuclear localization signal motif. The tract at residues 131-154 (PKAATLPNTEGEQPGPSVGPVGKD) is disordered.

The protein belongs to the NOSIP family. In terms of assembly, interacts with NOS1 and NOS3. Interacts with PP2A holoenzyme, containing PPP2CA, PPP2CB, PPP2R1A and PPP2R2A subunits.

Its subcellular location is the cytoplasm. It is found in the nucleus. The catalysed reaction is S-ubiquitinyl-[E2 ubiquitin-conjugating enzyme]-L-cysteine + [acceptor protein]-L-lysine = [E2 ubiquitin-conjugating enzyme]-L-cysteine + N(6)-ubiquitinyl-[acceptor protein]-L-lysine.. It participates in protein modification; protein ubiquitination. E3 ubiquitin-protein ligase that is essential for proper development of the forebrain, the eye and the face. Catalyzes monoubiquitination of serine/threonine-protein phosphatase 2A (PP2A) catalytic subunit PPP2CA/PPP2CB. Negatively regulates nitric oxide production by inducing NOS1 and NOS3 translocation to actin cytoskeleton and inhibiting their enzymatic activity. In Mus musculus (Mouse), this protein is Nitric oxide synthase-interacting protein (Nosip).